Consider the following 647-residue polypeptide: ATP-dependent zinc metalloprotease FtsH (647 aa).

Residues Met-1–Pro-33 form a disordered region. The Cytoplasmic portion of the chain corresponds to Met-1–His-39. A helical membrane pass occupies residues Phe-40 to Gly-60. The Periplasmic portion of the chain corresponds to Glu-61 to Trp-134. The helical transmembrane segment at Leu-135–Leu-155 threads the bilayer. Residues Met-156–Ala-647 are Cytoplasmic-facing. Residue Gly-227–Thr-234 coordinates ATP. His-449 contacts Zn(2+). The active site involves Glu-450. Zn(2+) contacts are provided by His-453 and Asp-526.

The protein in the central section; belongs to the AAA ATPase family. In the C-terminal section; belongs to the peptidase M41 family. In terms of assembly, homohexamer. Zn(2+) is required as a cofactor.

The protein resides in the cell inner membrane. Functionally, acts as a processive, ATP-dependent zinc metallopeptidase for both cytoplasmic and membrane proteins. Plays a role in the quality control of integral membrane proteins. The polypeptide is ATP-dependent zinc metalloprotease FtsH (Syntrophobacter fumaroxidans (strain DSM 10017 / MPOB)).